A 447-amino-acid polypeptide reads, in one-letter code: Adenylosuccinate synthetase (447 aa).

Residues 35 to 41 and 63 to 65 each bind GTP; these read GDEGKGK and GHT. The active-site Proton acceptor is Asp-36. The Mg(2+) site is built by Asp-36 and Gly-63. IMP contacts are provided by residues 36 to 39, 61 to 64, Thr-153, Arg-167, Asn-245, Thr-260, and Arg-324; these read DEGK and NAGH. The Proton donor role is filled by His-64. 320-326 contacts substrate; sequence VTTKRKR. Residues Arg-326, 352-354, and 435-437 contribute to the GTP site; these read KLD and GVG.

The protein belongs to the adenylosuccinate synthetase family. In terms of assembly, homodimer. It depends on Mg(2+) as a cofactor.

It localises to the cytoplasm. The catalysed reaction is IMP + L-aspartate + GTP = N(6)-(1,2-dicarboxyethyl)-AMP + GDP + phosphate + 2 H(+). The protein operates within purine metabolism; AMP biosynthesis via de novo pathway; AMP from IMP: step 1/2. In terms of biological role, plays an important role in the de novo pathway and in the salvage pathway of purine nucleotide biosynthesis. Catalyzes the first committed step in the biosynthesis of AMP from IMP. Plays a role in the regulation of adult life span. This chain is Adenylosuccinate synthetase, found in Drosophila melanogaster (Fruit fly).